The sequence spans 261 residues: Urease accessory protein UreD (261 aa).

It belongs to the UreD family. As to quaternary structure, ureD, UreF and UreG form a complex that acts as a GTP-hydrolysis-dependent molecular chaperone, activating the urease apoprotein by helping to assemble the nickel containing metallocenter of UreC. The UreE protein probably delivers the nickel.

The protein resides in the cytoplasm. Its function is as follows. Required for maturation of urease via the functional incorporation of the urease nickel metallocenter. This chain is Urease accessory protein UreD, found in Haemophilus influenzae (strain ATCC 51907 / DSM 11121 / KW20 / Rd).